A 210-amino-acid polypeptide reads, in one-letter code: dTTP/UTP pyrophosphatase (210 aa).

D89 acts as the Proton acceptor in catalysis.

The protein belongs to the Maf family. YhdE subfamily. A divalent metal cation serves as cofactor.

It is found in the cytoplasm. The enzyme catalyses dTTP + H2O = dTMP + diphosphate + H(+). The catalysed reaction is UTP + H2O = UMP + diphosphate + H(+). Functionally, nucleoside triphosphate pyrophosphatase that hydrolyzes dTTP and UTP. May have a dual role in cell division arrest and in preventing the incorporation of modified nucleotides into cellular nucleic acids. The chain is dTTP/UTP pyrophosphatase from Burkholderia orbicola (strain AU 1054).